A 122-amino-acid polypeptide reads, in one-letter code: Large ribosomal subunit protein uL14 (122 aa).

This sequence belongs to the universal ribosomal protein uL14 family. As to quaternary structure, part of the 50S ribosomal subunit. Forms a cluster with proteins L3 and L19. In the 70S ribosome, L14 and L19 interact and together make contacts with the 16S rRNA in bridges B5 and B8.

Its function is as follows. Binds to 23S rRNA. Forms part of two intersubunit bridges in the 70S ribosome. This is Large ribosomal subunit protein uL14 from Caulobacter sp. (strain K31).